The primary structure comprises 198 residues: GTP-binding protein Di-Ras1 (198 aa).

GTP-binding positions include 17-22, 33-39, 61-65, 121-125, A151, and 151-152; these read GVGKSS, RDTYIPT, DTTGS, NKCDE, and AK. Positions 36–44 match the Effector region motif; the sequence is YIPTIEDTY. Residue C195 is modified to Cysteine methyl ester. C195 is lipidated: S-geranylgeranyl cysteine. Residues 196 to 198 constitute a propeptide, removed in mature form; that stretch reads ALM.

This sequence belongs to the small GTPase superfamily. Di-Ras family.

The protein resides in the cell membrane. Functionally, displays low GTPase activity and exists predominantly in the GTP-bound form. In Mus musculus (Mouse), this protein is GTP-binding protein Di-Ras1 (Diras1).